We begin with the raw amino-acid sequence, 574 residues long: Proline--tRNA ligase (574 aa).

It belongs to the class-II aminoacyl-tRNA synthetase family. ProS type 1 subfamily. As to quaternary structure, homodimer.

The protein resides in the cytoplasm. The enzyme catalyses tRNA(Pro) + L-proline + ATP = L-prolyl-tRNA(Pro) + AMP + diphosphate. Its function is as follows. Catalyzes the attachment of proline to tRNA(Pro) in a two-step reaction: proline is first activated by ATP to form Pro-AMP and then transferred to the acceptor end of tRNA(Pro). As ProRS can inadvertently accommodate and process non-cognate amino acids such as alanine and cysteine, to avoid such errors it has two additional distinct editing activities against alanine. One activity is designated as 'pretransfer' editing and involves the tRNA(Pro)-independent hydrolysis of activated Ala-AMP. The other activity is designated 'posttransfer' editing and involves deacylation of mischarged Ala-tRNA(Pro). The misacylated Cys-tRNA(Pro) is not edited by ProRS. The polypeptide is Proline--tRNA ligase (Fervidobacterium nodosum (strain ATCC 35602 / DSM 5306 / Rt17-B1)).